Here is a 284-residue protein sequence, read N- to C-terminus: Tropomyosin alpha-1 chain (284 aa).

The tract at residues Met-1–Lys-37 is disordered. Positions Met-1–Ile-284 form a coiled coil. A compositionally biased stretch (basic and acidic residues) spans Lys-12–Lys-37.

The protein belongs to the tropomyosin family. In terms of assembly, homodimer. Heterodimer of an alpha (TPM1, TPM3 or TPM4) and a beta (TPM2) chain.

It is found in the cytoplasm. The protein resides in the cytoskeleton. Functionally, binds to actin filaments in muscle and non-muscle cells. Plays a central role, in association with the troponin complex, in the calcium dependent regulation of vertebrate striated muscle contraction. Smooth muscle contraction is regulated by interaction with caldesmon. In non-muscle cells is implicated in stabilizing cytoskeleton actin filaments. This Danio rerio (Zebrafish) protein is Tropomyosin alpha-1 chain (tpma).